A 99-amino-acid polypeptide reads, in one-letter code: MLNKNKRWYLIALYDIYQGLLTTKQCEYFNLHYFKDLSFSEIAELKEISKSAISDCLNKVCDQLLKYEQALLIYEKNKKRNDLYTLINDSELVKKLKDI.

Belongs to the UPF0122 family.

Functionally, might take part in the signal recognition particle (SRP) pathway. This is inferred from the conservation of its genetic proximity to ftsY/ffh. May be a regulatory protein. In Ureaplasma parvum serovar 3 (strain ATCC 700970), this protein is UPF0122 protein UU142.